Consider the following 274-residue polypeptide: MIQTQSPPDALQIANRSFRSRLMTGTGKYRSFEVMRAAVAASGSEIVTVAVRRVQEGVPGHGGLGQELNWQKLWMLPNTAGAKSAEEAVRYAHFGREMAKILGQEDNHWVKLEVIPETKYLLPDPLGTLQAAETLIKQGFTVLPYINADFHLARRLWEMGCATVMPLGSPIGSGQGLQNAAAIALIIAESPVPVVVDAGIRTPSEACRAMEMGAAALLINTAIAQAEEPIAMGRAMGLATEAGRLAHQAGAIPVKTYASASSPLTGLVGSAVGS.

Lys111 serves as the catalytic Schiff-base intermediate with DXP. 1-deoxy-D-xylulose 5-phosphate is bound by residues Gly172, 198–199 (AG), and 220–221 (NT).

The protein belongs to the ThiG family. As to quaternary structure, homotetramer. Forms heterodimers with either ThiH or ThiS.

It is found in the cytoplasm. The enzyme catalyses [ThiS sulfur-carrier protein]-C-terminal-Gly-aminoethanethioate + 2-iminoacetate + 1-deoxy-D-xylulose 5-phosphate = [ThiS sulfur-carrier protein]-C-terminal Gly-Gly + 2-[(2R,5Z)-2-carboxy-4-methylthiazol-5(2H)-ylidene]ethyl phosphate + 2 H2O + H(+). The protein operates within cofactor biosynthesis; thiamine diphosphate biosynthesis. Its function is as follows. Catalyzes the rearrangement of 1-deoxy-D-xylulose 5-phosphate (DXP) to produce the thiazole phosphate moiety of thiamine. Sulfur is provided by the thiocarboxylate moiety of the carrier protein ThiS. In vitro, sulfur can be provided by H(2)S. In Gloeobacter violaceus (strain ATCC 29082 / PCC 7421), this protein is Thiazole synthase.